The sequence spans 413 residues: Phosphopentomutase (413 aa).

Positions 11, 306, 311, 347, 348, and 359 each coordinate Mn(2+).

Belongs to the phosphopentomutase family. The cofactor is Mn(2+).

Its subcellular location is the cytoplasm. It catalyses the reaction 2-deoxy-alpha-D-ribose 1-phosphate = 2-deoxy-D-ribose 5-phosphate. The catalysed reaction is alpha-D-ribose 1-phosphate = D-ribose 5-phosphate. The protein operates within carbohydrate degradation; 2-deoxy-D-ribose 1-phosphate degradation; D-glyceraldehyde 3-phosphate and acetaldehyde from 2-deoxy-alpha-D-ribose 1-phosphate: step 1/2. Functionally, isomerase that catalyzes the conversion of deoxy-ribose 1-phosphate (dRib-1-P) and ribose 1-phosphate (Rib-1-P) to deoxy-ribose 5-phosphate (dRib-5-P) and ribose 5-phosphate (Rib-5-P), respectively. The protein is Phosphopentomutase of Helicobacter pylori (strain Shi470).